A 228-amino-acid chain; its full sequence is Rab-like protein 2A (228 aa).

GTP is bound by residues 28–35, 76–80, and 133–136; these read GDSAVGKS, DTAGQ, and NKID. The tract at residues 200 to 228 is disordered; it reads LEQEEEDVPDQEQSSSIETPSEEVASPHS.

The protein belongs to the small GTPase superfamily. Rab family. In terms of assembly, interacts with IFT27, IFT81, IFT172, ATP6V1E1, HK1, LDHC, MAPRE1 and HSPA2. Expressed in the testis.

In terms of biological role, plays an essential role in male fertility, sperm intra-flagellar transport, and tail assembly. Binds, in a GTP-regulated manner, to a specific set of effector proteins including key proteins involved in cilia development and function and delivers them into the growing sperm tail. In Homo sapiens (Human), this protein is Rab-like protein 2A (RABL2A).